A 1322-amino-acid polypeptide reads, in one-letter code: Ice nucleation protein InaA (1322 aa).

An octapeptide periodicity region spans residues 162-1281 (ATYGSTLSGT…LTAGENSVLI (1120 aa)). Polar residues-rich tracts occupy residues 271 to 302 (SLTAGYGSTQTAGEDSSLTAGYGSTQTAQKGS), 327 to 350 (TQTAGEESTQTAGYGSTQTAQKGS), 373 to 398 (GSTQTAGEDSSLTAGYGSTQTAQKGS), and 423 to 446 (TQTAGEESTQTAGYGSTQTAQKGS). Disordered regions lie at residues 271–303 (SLTAGYGSTQTAGEDSSLTAGYGSTQTAQKGSD), 327–358 (TQTAGEESTQTAGYGSTQTAQKGSDLTAGYGS), 372–399 (YGSTQTAGEDSSLTAGYGSTQTAQKGSD), and 423–448 (TQTAGEESTQTAGYGSTQTAQKGSDL).

The protein belongs to the bacterial ice nucleation protein family.

The protein localises to the cell outer membrane. Its function is as follows. Ice nucleation proteins enable bacteria to nucleate crystallization in supercooled water. This Pantoea ananas (Erwinia uredovora) protein is Ice nucleation protein InaA (inaA).